The chain runs to 338 residues: tRNA N6-adenosine threonylcarbamoyltransferase (338 aa).

Positions 111 and 115 each coordinate Fe cation. Substrate is bound by residues 134–138, Asp167, Gly180, Asp184, and Asn272; that span reads VVSGG. Asp300 contributes to the Fe cation binding site.

This sequence belongs to the KAE1 / TsaD family. The cofactor is Fe(2+).

Its subcellular location is the cytoplasm. The enzyme catalyses L-threonylcarbamoyladenylate + adenosine(37) in tRNA = N(6)-L-threonylcarbamoyladenosine(37) in tRNA + AMP + H(+). Its function is as follows. Required for the formation of a threonylcarbamoyl group on adenosine at position 37 (t(6)A37) in tRNAs that read codons beginning with adenine. Is involved in the transfer of the threonylcarbamoyl moiety of threonylcarbamoyl-AMP (TC-AMP) to the N6 group of A37, together with TsaE and TsaB. TsaD likely plays a direct catalytic role in this reaction. The polypeptide is tRNA N6-adenosine threonylcarbamoyltransferase (Syntrophus aciditrophicus (strain SB)).